Here is a 155-residue protein sequence, read N- to C-terminus: Small ribosomal subunit protein uS7 (155 aa).

The protein belongs to the universal ribosomal protein uS7 family. As to quaternary structure, part of the 30S ribosomal subunit. Contacts proteins S9 and S11.

One of the primary rRNA binding proteins, it binds directly to 16S rRNA where it nucleates assembly of the head domain of the 30S subunit. Is located at the subunit interface close to the decoding center, probably blocks exit of the E-site tRNA. The chain is Small ribosomal subunit protein uS7 from Chlorobium limicola (strain DSM 245 / NBRC 103803 / 6330).